A 131-amino-acid chain; its full sequence is MSDIPGDLKFLKSHEWVRIEDNNRAIVGISDHAQNLLGDLVYVELPNIGDHLDAGTTAAVIESVKAASDIYSPVTGKVIEVNTTLSDKPETINEDPYGEGWIMVIEMQAPEEISDLLSPDDYTKVLESDEH.

The Lipoyl-binding domain occupies Arg-24 to Glu-106. An N6-lipoyllysine modification is found at Lys-65.

Belongs to the GcvH family. The glycine cleavage system is composed of four proteins: P, T, L and H. Requires (R)-lipoate as cofactor.

Functionally, the glycine cleavage system catalyzes the degradation of glycine. The H protein shuttles the methylamine group of glycine from the P protein to the T protein. The chain is Glycine cleavage system H protein from Xylella fastidiosa (strain 9a5c).